Here is a 233-residue protein sequence, read N- to C-terminus: 5'-methylthioadenosine/S-adenosylhomocysteine nucleosidase (233 aa).

The active-site Proton acceptor is E12. Substrate-binding positions include G78, I156, and 177–178 (ME). The active-site Proton donor is D201.

Belongs to the PNP/UDP phosphorylase family. MtnN subfamily.

It catalyses the reaction S-adenosyl-L-homocysteine + H2O = S-(5-deoxy-D-ribos-5-yl)-L-homocysteine + adenine. The catalysed reaction is S-methyl-5'-thioadenosine + H2O = 5-(methylsulfanyl)-D-ribose + adenine. The enzyme catalyses 5'-deoxyadenosine + H2O = 5-deoxy-D-ribose + adenine. It functions in the pathway amino-acid biosynthesis; L-methionine biosynthesis via salvage pathway; S-methyl-5-thio-alpha-D-ribose 1-phosphate from S-methyl-5'-thioadenosine (hydrolase route): step 1/2. Its function is as follows. Catalyzes the irreversible cleavage of the glycosidic bond in both 5'-methylthioadenosine (MTA) and S-adenosylhomocysteine (SAH/AdoHcy) to adenine and the corresponding thioribose, 5'-methylthioribose and S-ribosylhomocysteine, respectively. Also cleaves 5'-deoxyadenosine, a toxic by-product of radical S-adenosylmethionine (SAM) enzymes, into 5-deoxyribose and adenine. The polypeptide is 5'-methylthioadenosine/S-adenosylhomocysteine nucleosidase (Listeria monocytogenes serotype 4b (strain F2365)).